The primary structure comprises 153 residues: Succinate dehydrogenase assembly factor 2, mitochondrial (153 aa).

It belongs to the SDHAF2 family. In terms of assembly, interacts with the flavoprotein subunit within the SDH catalytic dimer.

The protein resides in the mitochondrion matrix. In terms of biological role, plays an essential role in the assembly of succinate dehydrogenase (SDH), an enzyme complex (also referred to as respiratory complex II) that is a component of both the tricarboxylic acid (TCA) cycle and the mitochondrial electron transport chain, and which couples the oxidation of succinate to fumarate with the reduction of ubiquinone (coenzyme Q) to ubiquinol. Required for flavinylation (covalent attachment of FAD) of the flavoprotein subunit of the SDH catalytic dimer. The protein is Succinate dehydrogenase assembly factor 2, mitochondrial of Candida glabrata (strain ATCC 2001 / BCRC 20586 / JCM 3761 / NBRC 0622 / NRRL Y-65 / CBS 138) (Yeast).